We begin with the raw amino-acid sequence, 517 residues long: Protein MGF 505-2R (517 aa).

Belongs to the asfivirus MGF 505 family.

Functionally, plays a role in virus cell tropism, and may be required for efficient virus replication in macrophages. In African swine fever virus (isolate Warthog/Namibia/Wart80/1980) (ASFV), this protein is Protein MGF 505-2R.